A 320-amino-acid polypeptide reads, in one-letter code: SUN domain-containing protein 3 (320 aa).

The Nuclear segment spans residues 1–6 (MLTRSW). Residues 7–29 (KIILSTVFISTFLLVGLLNHQWL) form a helical membrane-spanning segment. Over 30 to 320 (KETEFPQKPR…RVHGIPSDYT (291 aa)) the chain is Perinuclear space. Positions 63–102 (KEQQELLKKESQTLENNFREILFLIEQIDVLKALLKDMKD) form a coiled coil. The SUN domain occupies 156–317 (GASVIEAGTS…YRFRVHGIPS (162 aa)).

Self-associates. Interacts with SYNE1 and SPAG4/SUN4. Proposed to form a spermatogenesis-specific LINC complex with SYNE1 during sperm head formation possibly implicating a SUN domain-based heterotrimer with SPAG4/SUN4 associating with SYNE1. Can interact with SYNE3; the interaction is questioned by missing colocalization in spermatids. In terms of tissue distribution, specifically expressed in testis (at protein level).

The protein localises to the membrane. It is found in the nucleus envelope. It localises to the nucleus inner membrane. Its function is as follows. As a probable component of the LINC (LInker of Nucleoskeleton and Cytoskeleton) complex, involved in the connection between the nuclear lamina and the cytoskeleton. The nucleocytoplasmic interactions established by the LINC complex play an important role in the transmission of mechanical forces across the nuclear envelope and in nuclear movement and positioning. May be involved in nuclear remodeling during sperm head formation in spermatogenesis. A probable SUN3:SYNE1 LINC complex may tether spermatid nuclei to posterior cytoskeletal structures such as the manchette. The protein is SUN domain-containing protein 3 (Sun3) of Mus musculus (Mouse).